Here is a 906-residue protein sequence, read N- to C-terminus: Gamma-tubulin complex component 3 homolog (906 aa).

A compositionally biased stretch (polar residues) spans 208–229 (GQQPSQQSTTTKGLPNTVSRNV). Residues 208 to 242 (GQQPSQQSTTTKGLPNTVSRNVPRTRREGDSSGSV) form a disordered region.

The protein belongs to the TUBGCP family. Interacts with gamma-tubulin.

The protein resides in the cytoplasm. The protein localises to the cytoskeleton. It is found in the microtubule organizing center. It localises to the centrosome. Necessary for the recruitment of gamma-tubulin to the centrosome and for the formation of a functional centrosome. The polypeptide is Gamma-tubulin complex component 3 homolog (tubgcp3) (Xenopus laevis (African clawed frog)).